The chain runs to 120 residues: Small ribosomal subunit protein bS16 (120 aa).

The segment at 80–120 (GLKKRPARNNPHKGEPGKKAQERIAAAKQAAEDAKAAEASA) is disordered. The segment covering 81 to 90 (LKKRPARNNP) has biased composition (basic residues). Composition is skewed to basic and acidic residues over residues 91–101 (HKGEPGKKAQE) and 109–120 (AAEDAKAAEASA).

The protein belongs to the bacterial ribosomal protein bS16 family.

The protein is Small ribosomal subunit protein bS16 of Bartonella bacilliformis (strain ATCC 35685 / KC583 / Herrer 020/F12,63).